A 241-amino-acid polypeptide reads, in one-letter code: Fatty acid metabolism regulator protein (241 aa).

An HTH gntR-type domain is found at 6-74 (KGPASFAEKY…HGKPTRVNNF (69 aa)). A DNA-binding region (H-T-H motif) is located at residues 34-53 (ERELSELIGVTRTTLREVLQ).

As to quaternary structure, homodimer.

It is found in the cytoplasm. Its function is as follows. Multifunctional regulator of fatty acid metabolism. The chain is Fatty acid metabolism regulator protein from Shewanella sp. (strain MR-4).